The chain runs to 112 residues: ATP synthase subunit c (112 aa).

Helical transmembrane passes span 36-56 and 81-101; these read FSVLAAGLGLGVAALGGAIGM and MFIALAMIEAQVIYALVIALI.

This sequence belongs to the ATPase C chain family. As to quaternary structure, F-type ATPases have 2 components, F(1) - the catalytic core - and F(0) - the membrane proton channel. F(1) has five subunits: alpha(3), beta(3), gamma(1), delta(1), epsilon(1). F(0) has three main subunits: a(1), b(2) and c(10-14). The alpha and beta chains form an alternating ring which encloses part of the gamma chain. F(1) is attached to F(0) by a central stalk formed by the gamma and epsilon chains, while a peripheral stalk is formed by the delta and b chains.

It localises to the cell inner membrane. Functionally, f(1)F(0) ATP synthase produces ATP from ADP in the presence of a proton or sodium gradient. F-type ATPases consist of two structural domains, F(1) containing the extramembraneous catalytic core and F(0) containing the membrane proton channel, linked together by a central stalk and a peripheral stalk. During catalysis, ATP synthesis in the catalytic domain of F(1) is coupled via a rotary mechanism of the central stalk subunits to proton translocation. Its function is as follows. Key component of the F(0) channel; it plays a direct role in translocation across the membrane. A homomeric c-ring of between 10-14 subunits forms the central stalk rotor element with the F(1) delta and epsilon subunits. The sequence is that of ATP synthase subunit c from Campylobacter jejuni subsp. jejuni serotype O:6 (strain 81116 / NCTC 11828).